A 237-amino-acid chain; its full sequence is Ras-related protein RABA3 (237 aa).

35-42 serves as a coordination point for GTP; that stretch reads GDSAVGKT. Residues 57 to 65 carry the Effector region motif; that stretch reads SKSTIGVEF. GTP contacts are provided by residues 83 to 87, 141 to 144, and 172 to 173; these read DTAGQ, NKAD, and SA. 2 S-geranylgeranyl cysteine lipidation sites follow: Cys-235 and Cys-237. Cys-237 carries the cysteine methyl ester modification.

Belongs to the small GTPase superfamily. Rab family. Expressed in root tips.

It localises to the endosome membrane. The protein localises to the golgi apparatus. It is found in the trans-Golgi network membrane. Intracellular vesicle trafficking and protein transport. This Arabidopsis thaliana (Mouse-ear cress) protein is Ras-related protein RABA3 (RABA3).